Consider the following 222-residue polypeptide: Eukaryotic translation initiation factor 3 subunit K (222 aa).

Residues 46-208 enclose the PCI domain; that stretch reads YDLEANLAVL…KIKTKNITEK (163 aa).

The protein belongs to the eIF-3 subunit K family. As to quaternary structure, component of the eukaryotic translation initiation factor 3 (eIF-3) complex. The eIF-3 complex interacts with pix.

It localises to the cytoplasm. In terms of biological role, component of the eukaryotic translation initiation factor 3 (eIF-3) complex, which is involved in protein synthesis of a specialized repertoire of mRNAs and, together with other initiation factors, stimulates binding of mRNA and methionyl-tRNAi to the 40S ribosome. The eIF-3 complex specifically targets and initiates translation of a subset of mRNAs involved in cell proliferation. The chain is Eukaryotic translation initiation factor 3 subunit K from Drosophila virilis (Fruit fly).